We begin with the raw amino-acid sequence, 175 residues long: RNA pyrophosphohydrolase (175 aa).

The Nudix hydrolase domain occupies 6-149 (GYRPNVGIVI…KRDVYRRVMK (144 aa)). A Nudix box motif is present at residues 38 to 59 (GGINPGETAEQAMYRELFEEVG).

It belongs to the Nudix hydrolase family. RppH subfamily. The cofactor is a divalent metal cation.

In terms of biological role, accelerates the degradation of transcripts by removing pyrophosphate from the 5'-end of triphosphorylated RNA, leading to a more labile monophosphorylated state that can stimulate subsequent ribonuclease cleavage. This chain is RNA pyrophosphohydrolase, found in Erwinia tasmaniensis (strain DSM 17950 / CFBP 7177 / CIP 109463 / NCPPB 4357 / Et1/99).